We begin with the raw amino-acid sequence, 437 residues long: Perilipin-2 (437 aa).

Position 2 is an N-acetylalanine (Ala2). A Phosphoserine modification is found at Ser215. Tyr232 carries the phosphotyrosine modification. Positions 412-437 (SQNAQDQGAEMDKSSQETQRSEHKTH) are disordered. Residues 421 to 437 (EMDKSSQETQRSEHKTH) show a composition bias toward basic and acidic residues.

Belongs to the perilipin family. In terms of assembly, interacts with IRGC. Post-translationally, acylated; primarily with C14, C16 and C18 fatty acids. In terms of processing, phosphorylation at Tyr-232 by isoform 1 of CHKA (CHKalpha2) promotes dissociation from lipid droplets: dissociation is followed by recruitment of autophagosome machinery to lipid droplets and subsequent lipid droplet lipolysis. Polyubiquitination of Nt-acetylatable A-PLIN2 by MARCHF6 lead to degradation by 26S proteasomes. As to expression, milk lipid globules.

Its subcellular location is the membrane. It localises to the lipid droplet. Its function is as follows. Structural component of lipid droplets, which is required for the formation and maintenance of lipid storage droplets. The sequence is that of Perilipin-2 from Homo sapiens (Human).